The sequence spans 493 residues: NADH-ubiquinone oxidoreductase 51 kDa subunit, mitochondrial (493 aa).

The transit peptide at Met-1 to Phe-27 directs the protein to the mitochondrion. Position 96-105 (Gly-96–Gly-105) interacts with NAD(+). Gly-212 to Thr-259 is an FMN binding site. [4Fe-4S] cluster-binding residues include Cys-391, Cys-394, Cys-397, and Cys-437.

It belongs to the complex I 51 kDa subunit family. As to quaternary structure, complex I is composed of about 40 different subunits. This is a component of the flavoprotein-sulfur (FP) fragment of the enzyme. FMN is required as a cofactor. The cofactor is [4Fe-4S] cluster.

It localises to the mitochondrion inner membrane. It carries out the reaction a ubiquinone + NADH + 5 H(+)(in) = a ubiquinol + NAD(+) + 4 H(+)(out). In terms of biological role, core subunit of the mitochondrial membrane respiratory chain NADH dehydrogenase (Complex I) that is believed to belong to the minimal assembly required for catalysis. Complex I functions in the transfer of electrons from NADH to the respiratory chain. The immediate electron acceptor for the enzyme is believed to be ubiquinone. This is NADH-ubiquinone oxidoreductase 51 kDa subunit, mitochondrial (nuo-51) from Neurospora crassa (strain ATCC 24698 / 74-OR23-1A / CBS 708.71 / DSM 1257 / FGSC 987).